Consider the following 461-residue polypeptide: pre-mRNA splicing regulator USH1G (461 aa).

ANK repeat units lie at residues 31–60, 64–93, and 97–126; these read DGMT…DPDK, WGNT…NIWC, and DYHT…KQSS. The segment at 329 to 368 is disordered; it reads LGREDGGLDGAGTPRGRLHSSPSLDDDSLGSANSLQDRSC. The SAM domain maps to 385-447; that stretch reads LEPETSPLET…KILGAVRRRR (63 aa). Ser422 is modified (phosphoserine).

As to quaternary structure, part of a complex composed of USH1C, USH1G and MYO7A. Interacts with USH1C (via the first PDZ domain). Interacts with PDZD7. Interacts with CDH23 and PCDH15; these interactions may recruit USH1G to the plasma membrane. Interacts with intraflagellar transport proteins IFT20, IFT52 and IFT57. Interacts with splicing factors SF3B1, PRPF6, PRPF31 and SON. Interacts with the U4/U6.U5 tri-small nuclear ribonucleoprotein (tri-snRNP) complex in the presence of pre-mRNAs. Interacts (via SAM domain) with MAGI2 (via PDZ 6 domain); the interaction is triggered by phosphorylation of USH1G by CK2 and negatively regulates MAGI2-mediated endocytosis. Detected in stereocilia from cochlear hair cells (at protein level). Detected in retinal photoreceptor cell cilia (at protein level). Highly expressed in the cochlea, testis, cerebellum and eye, and low levels in brain, thymus and spleen. Significant signals detected in the neurosensory epithelium of inner ear cochlea and saccule, especially in inner and outer hair cells.

The protein resides in the cytoplasm. Its subcellular location is the cytosol. It localises to the cytoskeleton. The protein localises to the cell membrane. It is found in the cell projection. The protein resides in the cilium. Its subcellular location is the nucleus speckle. It localises to the nucleus. The protein localises to the cajal body. It is found in the microtubule organizing center. The protein resides in the centrosome. Its subcellular location is the photoreceptor inner segment. In terms of biological role, plays a role in pre-mRNA splicing by regulating the release and transfer of U4/U6.U5 tri-small nuclear ribonucleoprotein (tri-snRNP) complexes from their assembly site in Cajal bodies to nuclear speckles, thereby contributing to the assembly of the pre-catalytic spliceosome on target pre-mRNAs. May also participate in recycling of snRNPs back to Cajal bodies during splicing. Plays a role in regulating MAGI2-mediated endocytosis. Anchoring/scaffolding protein that is a part of the functional network formed by USH1C, USH1G, CDH23 and MYO7A that mediates mechanotransduction in cochlear hair cells. Required for normal development and maintenance of cochlear hair cell bundles. Required for normal hearing. In Mus musculus (Mouse), this protein is pre-mRNA splicing regulator USH1G (Ush1g).